The sequence spans 337 residues: N-acetyl-gamma-glutamyl-phosphate reductase (337 aa).

Cys-149 is an active-site residue.

This sequence belongs to the NAGSA dehydrogenase family. Type 1 subfamily.

It localises to the cytoplasm. It catalyses the reaction N-acetyl-L-glutamate 5-semialdehyde + phosphate + NADP(+) = N-acetyl-L-glutamyl 5-phosphate + NADPH + H(+). It functions in the pathway amino-acid biosynthesis; L-arginine biosynthesis; N(2)-acetyl-L-ornithine from L-glutamate: step 3/4. In terms of biological role, catalyzes the NADPH-dependent reduction of N-acetyl-5-glutamyl phosphate to yield N-acetyl-L-glutamate 5-semialdehyde. This Wolinella succinogenes (strain ATCC 29543 / DSM 1740 / CCUG 13145 / JCM 31913 / LMG 7466 / NCTC 11488 / FDC 602W) (Vibrio succinogenes) protein is N-acetyl-gamma-glutamyl-phosphate reductase.